Here is a 97-residue protein sequence, read N- to C-terminus: RPHVHPPPEHQPPLEHPPPEYQPPHEKPPHVHPPPEYQPPYQKPPHEKSPYEPPPQEYQPPHEKPPQVKPPSEYQPPHEKPPHEHPPPEYQPPHEKP.

Positions 1 to 97 (RPHVHPPPEH…PEYQPPHEKP (97 aa)) are disordered. Composition is skewed to pro residues over residues 9–22 (EHQPPLEHPPPEYQ) and 31–43 (VHPPPEYQPPYQK). Over residues 76–97 (PPHEKPPHEHPPPEYQPPHEKP) the composition is skewed to basic and acidic residues.

This sequence belongs to the nodulin 75 family.

Involved in early stages of root nodule development. In Medicago sativa (Alfalfa), this protein is Early nodulin-75 (ENOD2).